Reading from the N-terminus, the 897-residue chain is MQTHEIRKRFLDHFVKAGHTEVPSASVILDDPNLLFVNAGMVQFVPFFLGQRTPPYQRATSIQKCIRTPDIDEVGITTRHNTFFQMAGNFSFGDYFKKGAIEFAWTLLTNPVDQGGYGFDPEKLWATVYLDDDEAIQLWQEVAGLPLERIQRRGMADNYWSMGIPGPCGPSSEIYVDRGPEYGIEGGPEANEDRYIEIWNLVFMQNERGEGTGKSDFEILGPLPRKNIDTGMGIERVACLLQGVDNVYETDLLRPVIDAVAARAPRGYGRGSHSDDVRYRIIADHSRTAAILIGDGVSPGNDGRGYVLRRLLRRVIRSAKLLGIDDAVVGDLMATVRDAMGPSYPELVTDFDRIQRIAVAEETAFNRTLSSGSRLFEEAAQSTKAAGADRLSGRDAFTLHDTYGFPIELTLEMAAEADLAVDEEGFRSLMAEQRQRAKADAAARKQAHTDLTAYRELVDAHPTQFTGFDELTTEARILGIFVDGRRVPVVGHDTATAQHRIELVLDRSPFYAESGGQIADEGTITGTGASQTAKAAVSDVQKIAKTLWVHRVTVESGEFVEGDTVTAAVDPRWRHGATQGHSGTHMVHAALRQVLGPNAVQAGSLNRPGYLRFDFNWQGALTDDQRTQIEEVTNEAVEADFEVHSFTTELEKAKSMGAMALFGEAYPDEVRVVEIGGPFSLELCGGTHVRSSAQIGPVTILGESSVGSGVRRVEAYVGLDSFRHLAKERALMAGLASSLKVPSEEVPARVAGLVERLKAAEKELDRMRLANARAAAVNAVAGAERVGKVRLVAQRMAGGMSAGDLRTLVGDIRGKLGGDPAVVALIAEGDNDTVPFVVAVNPAAQDLGLRANELVKQFGAAVNGRGGGKADLAQGSGKGAAGIDAALAALRAEIDRS.

Zn(2+) contacts are provided by His581, His585, Cys684, and His688.

The protein belongs to the class-II aminoacyl-tRNA synthetase family. Zn(2+) serves as cofactor.

It is found in the cytoplasm. It carries out the reaction tRNA(Ala) + L-alanine + ATP = L-alanyl-tRNA(Ala) + AMP + diphosphate. Its function is as follows. Catalyzes the attachment of alanine to tRNA(Ala) in a two-step reaction: alanine is first activated by ATP to form Ala-AMP and then transferred to the acceptor end of tRNA(Ala). Also edits incorrectly charged Ser-tRNA(Ala) and Gly-tRNA(Ala) via its editing domain. In Mycobacterium sp. (strain KMS), this protein is Alanine--tRNA ligase.